The chain runs to 509 residues: Cobyric acid synthase (509 aa).

Residues Glu-262–Trp-459 enclose the GATase cobBQ-type domain. Cys-343 (nucleophile) is an active-site residue. His-451 is an active-site residue.

It belongs to the CobB/CobQ family. CobQ subfamily.

It participates in cofactor biosynthesis; adenosylcobalamin biosynthesis. Catalyzes amidations at positions B, D, E, and G on adenosylcobyrinic A,C-diamide. NH(2) groups are provided by glutamine, and one molecule of ATP is hydrogenolyzed for each amidation. The chain is Cobyric acid synthase from Prochlorococcus marinus subsp. pastoris (strain CCMP1986 / NIES-2087 / MED4).